We begin with the raw amino-acid sequence, 91 residues long: MKKLVLLSAFVLLAFQVQADSIQNTDEETKTEEQPGEENQAMSVSFGDPEGSALQDAAVGMARPCPPCPSCPSCPWCPMCPRCPSCKCNPK.

An N-terminal signal peptide occupies residues 1–19 (MKKLVLLSAFVLLAFQVQA). The propeptide occupies 20-65 (DSIQNTDEETKTEEQPGEENQAMSVSFGDPEGSALQDAAVGMARPC). Residues 21-52 (SIQNTDEETKTEEQPGEENQAMSVSFGDPEGS) are disordered. 7 tandem repeats follow at residues 65 to 67 (CPP), 68 to 70 (CPS), 71 to 73 (CPS), 74 to 76 (CPW), 77 to 79 (CPM), 80 to 82 (CPR), and 83 to 85 (CPS). Positions 65 to 85 (CPPCPSCPSCPWCPMCPRCPS) are 7 X 3 AA tandem repeats of C-P-X.

It belongs to the alpha-defensin family. Paneth cells of the small bowel.

The protein localises to the secreted. Functionally, apparent precursor of a secreted, cationic, proline- and cysteine-rich peptide that contains Cys-Pro-Xaa repeats. Unlike cryptdin, the proposed mature peptide region lacks the structural motif characteristic of defensins. It may have microbicidal activities. The protein is Alpha-defensin-related sequence 10 (Defa-rs10) of Mus musculus (Mouse).